The chain runs to 530 residues: MLLWPLLLLLLLLPTLALLRQQRSQDARLSWLAGLQHRVAWGALVWAATWQRRRLEQSTLHVHQSQQQALRWCLQGAQRPHCSLRRSTDISTFRNHLPLTKASQTQQEDSGEQPLPPTSNQDLGEASLQATLLGLAALNKAYPEVLAQGRTARVTLTSPWPRPLPWPGNTLGQVGTPGTKDPRALLLDALRSPGLRALEAGTAVELLDVFLGLETDGEELAGAIAAGNPGAPLRERAAELREALEQGPRGLALRLWPKLQVVVTLDAGGQAEAVAALGALWCQGLAFFSPAYAASGGVLGLNLQPEQPHGLYLLPPGAPFIELLPVKEGTQEEAASTLLLAEAQQGKEYELVLTDRASLTRCRLGDVVRVVGAYNQCPVVRFICRLDQTLSVRGEDIGEDLFSEALGRAVGQWAGAKLLDHGCVESSILDSSAGSAPHYEVFVALRGLRNLSEENRDKLDHCLQEASPRYKSLRFWGSVGPARVHLVGQGAFRALRAALAACPSSPFPPAMPRVLRHRHLAQCLQERVVS.

An N-terminal signal peptide occupies residues 1 to 17 (MLLWPLLLLLLLLPTLA). Residues 99–122 (LTKASQTQQEDSGEQPLPPTSNQD) are disordered. N450 is a glycosylation site (N-linked (GlcNAc...) asparagine). An N5-methylglutamine modification is found at Q489.

This sequence belongs to the GH3 family. Methylated at Gln-489 by N6AMT1.

The protein localises to the endoplasmic reticulum. Its subcellular location is the nucleus envelope. The chain is GH3 domain-containing protein (GHDC) from Homo sapiens (Human).